We begin with the raw amino-acid sequence, 317 residues long: MIFKPQSFLKAIVLSMTITFAFNMSAPIASAYPIFAQQNYENPREANGRIVCANCHLAQKPVELEVPQAVLPDTVFEAIIQIPYDTQVKQVLANGKKGDLNVGMVLILPEGFELAPADRIPEEMKKKVGNLYYQPYSPDKKNILVVGPVPGKQYSEMVVPLLSPDPATNKNVSYLKYPIYVGGNRGRGQVYPDGSKSNNTVYNSPVSGTITEILKLEGKKGGYTISITKADGVVLTEKIPGGPEVIVKEGQAIIADQPLTNNPNVGGFGQKDVEVVLQNPVRIQGLLAFFACILLAQILLVVKKKQFEKVQLAEMNF.

An N-terminal signal peptide occupies residues 1–31 (MIFKPQSFLKAIVLSMTITFAFNMSAPIASA). Positions 32, 52, 55, and 56 each coordinate heme. A helical membrane pass occupies residues 280–302 (PVRIQGLLAFFACILLAQILLVV).

The protein belongs to the cytochrome f family. In terms of assembly, the 4 large subunits of the cytochrome b6-f complex are cytochrome b6, subunit IV (17 kDa polypeptide, petD), cytochrome f and the Rieske protein, while the 4 small subunits are PetG, PetL, PetM and PetN. The complex functions as a dimer. The cofactor is heme.

Its subcellular location is the plastid. It is found in the chloroplast thylakoid membrane. In terms of biological role, component of the cytochrome b6-f complex, which mediates electron transfer between photosystem II (PSII) and photosystem I (PSI), cyclic electron flow around PSI, and state transitions. The protein is Cytochrome f of Chlamydomonas subcaudata.